The primary structure comprises 436 residues: Mannan endo-1,4-beta-mannosidase F (436 aa).

A signal peptide spans 1 to 18; that stretch reads MRSLSSVALLSAIGAASA. The CBM1 domain occupies 19–54; the sequence is QAGPWGQCAGISHTGPTTCESGWSCVYLNDWYSQCQ. Residues 60 to 88 are disordered; the sequence is SSSTTVSSTKQPSSTVAAPSSTTSAHTLP. Positions 79 to 113 are ser-rich linker; the sequence is SSTTSAHTLPTGSGSFAKTDGLKFNIDGKTKYFAG. Positions 114-436 are catalytic; that stretch reads TNAYWLPFLT…CAVIDHISQI (323 aa). The substrate site is built by W146 and N260. Catalysis depends on E261, which acts as the Proton donor. Y336 contributes to the substrate binding site. E370 serves as the catalytic Nucleophile. W400 lines the substrate pocket.

It belongs to the glycosyl hydrolase 5 (cellulase A) family.

It localises to the secreted. It carries out the reaction Random hydrolysis of (1-&gt;4)-beta-D-mannosidic linkages in mannans, galactomannans and glucomannans.. Functionally, endo-1,4-mannanase, a crucial enzyme for depolymerization of seed galactomannans and wood galactoglucomannans. This Aspergillus clavatus (strain ATCC 1007 / CBS 513.65 / DSM 816 / NCTC 3887 / NRRL 1 / QM 1276 / 107) protein is Mannan endo-1,4-beta-mannosidase F (manF).